Here is a 552-residue protein sequence, read N- to C-terminus: Arginine--tRNA ligase (552 aa).

Residues 129-139 carry the 'HIGH' region motif; sequence ANPTGPVTLAS.

This sequence belongs to the class-I aminoacyl-tRNA synthetase family. Monomer.

It is found in the cytoplasm. It carries out the reaction tRNA(Arg) + L-arginine + ATP = L-arginyl-tRNA(Arg) + AMP + diphosphate. The protein is Arginine--tRNA ligase of Frankia alni (strain DSM 45986 / CECT 9034 / ACN14a).